A 297-amino-acid polypeptide reads, in one-letter code: Large ribosomal subunit protein uL18 (297 aa).

The protein belongs to the universal ribosomal protein uL18 family. Component of the large ribosomal subunit (LSU).

Its subcellular location is the cytoplasm. The protein resides in the nucleus. Component of the ribosome, a large ribonucleoprotein complex responsible for the synthesis of proteins in the cell. The small ribosomal subunit (SSU) binds messenger RNAs (mRNAs) and translates the encoded message by selecting cognate aminoacyl-transfer RNA (tRNA) molecules. The large subunit (LSU) contains the ribosomal catalytic site termed the peptidyl transferase center (PTC), which catalyzes the formation of peptide bonds, thereby polymerizing the amino acids delivered by tRNAs into a polypeptide chain. The nascent polypeptides leave the ribosome through a tunnel in the LSU and interact with protein factors that function in enzymatic processing, targeting, and the membrane insertion of nascent chains at the exit of the ribosomal tunnel. In Lysiphlebus testaceipes (Greenbugs aphid parastoid), this protein is Large ribosomal subunit protein uL18 (RpL5).